A 136-amino-acid chain; its full sequence is NHL-repeat-containing protein 4 (136 aa).

NHL repeat units lie at residues 48-91 and 93-132; these read QPLG…FPRV and PPIC…YQYL.

In Mus musculus (Mouse), this protein is NHL-repeat-containing protein 4 (Nhlrc4).